A 294-amino-acid chain; its full sequence is Nucleotide-binding protein Cbei_4857 (294 aa).

Residue 8-15 (GLSGAGKT) participates in ATP binding. GTP is bound at residue 59–62 (DIRG).

This sequence belongs to the RapZ-like family.

Displays ATPase and GTPase activities. The sequence is that of Nucleotide-binding protein Cbei_4857 from Clostridium beijerinckii (strain ATCC 51743 / NCIMB 8052) (Clostridium acetobutylicum).